Here is a 110-residue protein sequence, read N- to C-terminus: UPF0060 membrane protein Ping_0587 (110 aa).

4 helical membrane-spanning segments follow: residues 6–26 (IFGI…LPYL), 33–53 (SIWL…LLTL), 61–81 (TYAA…WLVE), and 87–107 (MTDL…MFGP).

Belongs to the UPF0060 family.

The protein resides in the cell inner membrane. This Psychromonas ingrahamii (strain DSM 17664 / CCUG 51855 / 37) protein is UPF0060 membrane protein Ping_0587.